The chain runs to 148 residues: Large ribosomal subunit protein cL37 (148 aa).

Residues 1-65 (MALLCFNSLP…SSHGRIVVKA (65 aa)) constitute a chloroplast transit peptide. Ala-66 is modified (N-acetylalanine). Positions 125–148 (LVRKRKMRKKGRWPPSKMKKNKNV) are disordered.

The protein belongs to the chloroplast-specific ribosomal protein cL37 family. In terms of assembly, part of the 50S ribosomal subunit.

It is found in the plastid. It localises to the chloroplast. This Arabidopsis thaliana (Mouse-ear cress) protein is Large ribosomal subunit protein cL37 (PSRP5).